We begin with the raw amino-acid sequence, 284 residues long: Ribose-phosphate pyrophosphokinase (284 aa).

ATP is bound by residues 34–36 and 92–93; these read DNE and RQ. Residues H125 and D163 each coordinate Mg(2+). K186 is a catalytic residue. Residues R188, D212, and 216-220 contribute to the D-ribose 5-phosphate site; that span reads STGGT.

This sequence belongs to the ribose-phosphate pyrophosphokinase family. Class III (archaeal) subfamily. As to quaternary structure, homotetramer. Mg(2+) is required as a cofactor.

Its subcellular location is the cytoplasm. The enzyme catalyses D-ribose 5-phosphate + ATP = 5-phospho-alpha-D-ribose 1-diphosphate + AMP + H(+). The protein operates within metabolic intermediate biosynthesis; 5-phospho-alpha-D-ribose 1-diphosphate biosynthesis; 5-phospho-alpha-D-ribose 1-diphosphate from D-ribose 5-phosphate (route I): step 1/1. With respect to regulation, activated by inorganic phosphate, with a maximal activity at 190 mM. Above this concentration inorganic phosphate progressively inhibits the kinase. Completely inhibited by ADP, and partially inhibited by alpha,beta-methylene ATP (mATP). Lack of allosteric regulation. In terms of biological role, involved in the biosynthesis of the central metabolite phospho-alpha-D-ribosyl-1-pyrophosphate (PRPP) via the transfer of pyrophosphoryl group from ATP to 1-hydroxyl of ribose-5-phosphate (Rib-5-P). It can also use dATP as diphosphoryl donor. This is Ribose-phosphate pyrophosphokinase from Methanocaldococcus jannaschii (strain ATCC 43067 / DSM 2661 / JAL-1 / JCM 10045 / NBRC 100440) (Methanococcus jannaschii).